The following is an 852-amino-acid chain: MEDSIIRIAPYHYIHVLDQNTNVARIENGPKTYIRQDNERVLFPPERMVTIPPRHYCVVANPVVRDREGMPVCDGFGQARLRHGDREVRLSQDPFPLYPGEELGQVATALQVVKTNSALHLQAQLDFEDHGEKRVAGDEWLFEGPGTYIPRTEVVMICWINAIVIRHNQGLRLRARKDTRDRDGRDRVTGEEWMVRRVGAYLPGVYEEVLDVVNAFILTEKRALHLRALQTVKDMRDRVRRTGEEWLVTLAEAEAYVPGVEEEVVGQVEVTTLGTRQYCVVLDPVGADGKPQLGQKLVVKGEKSFFLQPGEHLEAGIQDTYVLSEEEGLVLRAVEAFEEKDEAGKVHCRKPGDRWMIRGPVEYVPPVTVEVLSYRHAIPLDQNEGIYVRDLKSGKVRAVIGESYMLSQDEELWEKTLPPNVEALLTPDKDPVLNRNVHQSEAGHQEEGVKKRDPTRVVTFRVPHNAAVQVYDYSQKSARVVFGPELVMLETDEQLTVLSLSGGRPKRPGVIRSLCLLLGPDFFTDVIVIETADHARLQLQLAYNWHFEVKDRSDPMESAKVFSVLDFVGDACKAIASRIRGAVASVQFDDFHKNSSRILRAAVFGLDPELRVRERLLFPQNSLCVTSVDVHSVEPVDQRTRDALQRSVQLAIEITTKSQEAAARQEAARLEQEAKGRLERQRILDQAESERARRELLLLEADSTAVESRGAARAEAESRAEASRIEGEGSVLQAKLKAQALDIETEAELERLTKARERELKYIAEQNRLEVEKTRQLSELESRRFQEMVQAIGADTIRAIAESGPELQVKLLQGLGLNSTLITDGSTPVNLFSAAKGMLGVPAMSMEHRGSE.

MVP repeat units follow at residues glutamate 2 to arginine 54, histidine 55 to alanine 109, leucine 110 to asparagine 161, alanine 162 to asparagine 214, alanine 215 to glutamate 269, valine 270 to threonine 320, tyrosine 321 to alanine 377, isoleucine 378 to valine 457, and valine 458 to proline 520.

As to quaternary structure, the vault ribonucleoprotein particle is a huge (400 A x 670 A) cage structure of 12.9 MDa. It consists of a dimer of half-vaults, with each half-vault comprising 39 identical major vault protein (MVP) chains, PARP4 and one or more vault RNAs (vRNAs). As to expression, expression is highest in brain and enriched in the electric lobe. Closely associated with synaptic vesicles in the nerve terminals of the electric organ.

It localises to the cytoplasm. The protein localises to the nucleus. Required for normal vault structure. Vaults are multi-subunit structures that may act as scaffolds for proteins involved in signal transduction. Vaults may also play a role in nucleo-cytoplasmic transport. In Diplobatis ommata (Ocellated electric ray), this protein is Major vault protein (MVP).